A 406-amino-acid chain; its full sequence is Putative colanic acid biosynthesis glycosyltransferase WcaL (406 aa).

The protein belongs to the glycosyltransferase group 1 family. Glycosyltransferase 4 subfamily.

Its pathway is slime biogenesis; slime polysaccharide biosynthesis. This is Putative colanic acid biosynthesis glycosyltransferase WcaL (wcaL) from Escherichia coli (strain K12).